Reading from the N-terminus, the 707-residue chain is Polyribonucleotide nucleotidyltransferase (707 aa).

Positions 491 and 497 each coordinate Mg(2+). The 60-residue stretch at 558–617 folds into the KH domain; it reads PRIEKIKIHPDKIGLLIGPGGKTIKKISAESGAEITIEDDGTVMIYSSSADSLEAAREMI. An S1 motif domain is found at 622–695; it reads GEVTVGGIYR…EKGRYKFSRK (74 aa).

It belongs to the polyribonucleotide nucleotidyltransferase family. It depends on Mg(2+) as a cofactor.

The protein resides in the cytoplasm. It catalyses the reaction RNA(n+1) + phosphate = RNA(n) + a ribonucleoside 5'-diphosphate. Functionally, involved in mRNA degradation. Catalyzes the phosphorolysis of single-stranded polyribonucleotides processively in the 3'- to 5'-direction. This is Polyribonucleotide nucleotidyltransferase from Methylacidiphilum infernorum (isolate V4) (Methylokorus infernorum (strain V4)).